Consider the following 622-residue polypeptide: 1-deoxy-D-xylulose-5-phosphate synthase (622 aa).

Residues His-74 and 115-117 (GHS) contribute to the thiamine diphosphate site. Asp-146 is a binding site for Mg(2+). Residues 147-148 (GA), Asn-177, Phe-285, and Glu-366 each bind thiamine diphosphate. Residue Asn-177 coordinates Mg(2+).

It belongs to the transketolase family. DXPS subfamily. As to quaternary structure, homodimer. It depends on Mg(2+) as a cofactor. Requires thiamine diphosphate as cofactor.

It carries out the reaction D-glyceraldehyde 3-phosphate + pyruvate + H(+) = 1-deoxy-D-xylulose 5-phosphate + CO2. Its pathway is metabolic intermediate biosynthesis; 1-deoxy-D-xylulose 5-phosphate biosynthesis; 1-deoxy-D-xylulose 5-phosphate from D-glyceraldehyde 3-phosphate and pyruvate: step 1/1. Its function is as follows. Catalyzes the acyloin condensation reaction between C atoms 2 and 3 of pyruvate and glyceraldehyde 3-phosphate to yield 1-deoxy-D-xylulose-5-phosphate (DXP). The polypeptide is 1-deoxy-D-xylulose-5-phosphate synthase (Magnetococcus marinus (strain ATCC BAA-1437 / JCM 17883 / MC-1)).